A 412-amino-acid polypeptide reads, in one-letter code: Phosphate-repressible acid phosphatase (412 aa).

The N-terminal stretch at 1–19 (MLTKQTLLAFVGALALATG) is a signal peptide. N-linked (GlcNAc...) asparagine glycans are attached at residues Asn-74, Asn-121, Asn-186, and Asn-208. The active-site Proton donor is Asp-215. Asn-217, Asn-332, and Asn-343 each carry an N-linked (GlcNAc...) asparagine glycan.

The N-terminus is blocked.

It localises to the secreted. It carries out the reaction a phosphate monoester + H2O = an alcohol + phosphate. In Penicillium chrysogenum (Penicillium notatum), this protein is Phosphate-repressible acid phosphatase (PHOA).